The chain runs to 582 residues: ATP-dependent lipid A-core flippase (582 aa).

5 helical membrane passes run 16–36 (LWPT…ALIL), 64–84 (LMWM…TSYI), 153–173 (IIGL…ILIV), 253–273 (PIIQ…ASFP), and 275–295 (VMDS…IALM). The ABC transmembrane type-1 domain occupies 28-310 (IVAGVALILN…LTNVNAQFQR (283 aa)). One can recognise an ABC transporter domain in the interval 342 to 578 (VEFRNVTFTY…RGVYAQLHKM (237 aa)). Residue 376-383 (GRSGSGKS) participates in ATP binding.

This sequence belongs to the ABC transporter superfamily. Lipid exporter (TC 3.A.1.106) family. Homodimer.

It localises to the cell inner membrane. The catalysed reaction is ATP + H2O + lipid A-core oligosaccharideSide 1 = ADP + phosphate + lipid A-core oligosaccharideSide 2.. Functionally, involved in lipopolysaccharide (LPS) biosynthesis. Translocates lipid A-core from the inner to the outer leaflet of the inner membrane. Transmembrane domains (TMD) form a pore in the inner membrane and the ATP-binding domain (NBD) is responsible for energy generation. The polypeptide is ATP-dependent lipid A-core flippase (Escherichia coli O6:K15:H31 (strain 536 / UPEC)).